A 62-amino-acid polypeptide reads, in one-letter code: Photosystem II reaction center protein Z (62 aa).

The next 2 membrane-spanning stretches (helical) occupy residues 8–28 (AVFALIATSSILLISVPVVFA) and 41–61 (FSGTSLWIALVFLVGILNSLI).

It belongs to the PsbZ family. PSII is composed of 1 copy each of membrane proteins PsbA, PsbB, PsbC, PsbD, PsbE, PsbF, PsbH, PsbI, PsbJ, PsbK, PsbL, PsbM, PsbT, PsbY, PsbZ, Psb30/Ycf12, at least 3 peripheral proteins of the oxygen-evolving complex and a large number of cofactors. It forms dimeric complexes.

Its subcellular location is the plastid. It localises to the chloroplast thylakoid membrane. May control the interaction of photosystem II (PSII) cores with the light-harvesting antenna, regulates electron flow through the 2 photosystem reaction centers. PSII is a light-driven water plastoquinone oxidoreductase, using light energy to abstract electrons from H(2)O, generating a proton gradient subsequently used for ATP formation. This Lotus japonicus (Lotus corniculatus var. japonicus) protein is Photosystem II reaction center protein Z.